The following is a 569-amino-acid chain: Sugar transporter STL1 (569 aa).

Residues 1–29 (MKDLKLSNFKGKFISRTSHWGLTGKKLRY) lie on the Cytoplasmic side of the membrane. The helical transmembrane segment at 30–50 (FITIASMTGFSLFGYDQGLMA) threads the bilayer. The Extracellular portion of the chain corresponds to 51–79 (SLITGKQFNYEFPATKENGDHDRHATVVQ). The helical transmembrane segment at 80-100 (GATTSCYELGCFAGSLFVMFC) threads the bilayer. Topologically, residues 101–107 (GERIGRK) are cytoplasmic. A helical transmembrane segment spans residues 108 to 128 (PLILMGSVITIIGAVISTCAF). A topological domain (extracellular) is located at residue Arg129. Residues 130-150 (GYWALGQFIIGRVVTGVGTGL) traverse the membrane as a helical segment. Residues 151–168 (NTSTIPVWQSEMSKAENR) lie on the Cytoplasmic side of the membrane. The chain crosses the membrane as a helical span at residues 169 to 189 (GLLVNLEGSTIAFGTMIAYWI). The Extracellular portion of the chain corresponds to 190-203 (DFGLSYTNSSVQWR). N-linked (GlcNAc...) asparagine glycosylation occurs at Asn197. Residues 204 to 224 (FPVSMQIVFALFLLAFMIKLP) form a helical membrane-spanning segment. Over 225-291 (ESPRWLISQS…SRGRSQNLQR (67 aa)) the chain is Cytoplasmic. The helical transmembrane segment at 292 to 312 (ALIAASTQFFQQFTGCNAAIY) threads the bilayer. At 313-330 (YSTVLFNKTIKLDYRLSM) the chain is on the extracellular side. The N-linked (GlcNAc...) asparagine glycan is linked to Asn319. The helical transmembrane segment at 331–351 (IIGGVFATIYALSTIGSFFLI) threads the bilayer. Over 352–358 (EKLGRRK) the chain is Cytoplasmic. Residues 359–379 (LFLLGATGQAVSFTITFACLV) form a helical membrane-spanning segment. Over 380–389 (KENKENARGA) the chain is Extracellular. Residues 390–410 (AVGLFLFITFFGLSLLSLPWI) form a helical membrane-spanning segment. Residues 411-426 (YPPEIASMKVRASTNA) lie on the Cytoplasmic side of the membrane. The helical transmembrane segment at 427–447 (FSTCTNWLCNFAVVMFTPIFI) threads the bilayer. The Extracellular portion of the chain corresponds to 448–453 (GQSGWG). Residues 454–474 (CYLFFAVMNYLYIPVIFFFYP) traverse the membrane as a helical segment. Residues 475–569 (ETAGRSLEEI…TVNDKANFEG (95 aa)) lie on the Cytoplasmic side of the membrane. Residues 524 to 533 (DDEMEKEDFG) are compositionally biased toward acidic residues. Residues 524–569 (DDEMEKEDFGEDRVEDTYNQINGDNSSSSSNIKNEDTVNDKANFEG) are disordered. The segment covering 556–569 (KNEDTVNDKANFEG) has biased composition (basic and acidic residues).

This sequence belongs to the major facilitator superfamily. Sugar transporter (TC 2.A.1.1) family.

It localises to the membrane. This Saccharomyces cerevisiae (strain ATCC 204508 / S288c) (Baker's yeast) protein is Sugar transporter STL1 (STL1).